The sequence spans 255 residues: Small ribosomal subunit protein eS1 (255 aa).

Positions 1–18 (MAVGKNKRLSKGKKGLKK) are enriched in basic residues. A disordered region spans residues 1–28 (MAVGKNKRLSKGKKGLKKRTQDPFSRKD). Alanine 2 is subject to N-acetylalanine; partial. Residues 19–28 (RTQDPFSRKD) are compositionally biased toward basic and acidic residues.

This sequence belongs to the eukaryotic ribosomal protein eS1 family. Component of the small ribosomal subunit. Mature ribosomes consist of a small (40S) and a large (60S) subunit. The 40S subunit contains about 33 different proteins and 1 molecule of RNA (18S). The 60S subunit contains about 49 different proteins and 3 molecules of RNA (25S, 5.8S and 5S).

It is found in the cytoplasm. The chain is Small ribosomal subunit protein eS1 from Paracoccidioides lutzii (strain ATCC MYA-826 / Pb01) (Paracoccidioides brasiliensis).